We begin with the raw amino-acid sequence, 370 residues long: tRNA 2-selenouridine synthase (370 aa).

The 125-residue stretch at 12–136 folds into the Rhodanese domain; it reads FLDDVPMMDM…MRTFLLETTQ (125 aa). Catalysis depends on cysteine 95, which acts as the S-selanylcysteine intermediate.

It belongs to the SelU family. As to quaternary structure, monomer.

The catalysed reaction is 5-methylaminomethyl-2-thiouridine(34) in tRNA + selenophosphate + (2E)-geranyl diphosphate + H2O + H(+) = 5-methylaminomethyl-2-selenouridine(34) in tRNA + (2E)-thiogeraniol + phosphate + diphosphate. The enzyme catalyses 5-methylaminomethyl-2-thiouridine(34) in tRNA + (2E)-geranyl diphosphate = 5-methylaminomethyl-S-(2E)-geranyl-thiouridine(34) in tRNA + diphosphate. It carries out the reaction 5-methylaminomethyl-S-(2E)-geranyl-thiouridine(34) in tRNA + selenophosphate + H(+) = 5-methylaminomethyl-2-(Se-phospho)selenouridine(34) in tRNA + (2E)-thiogeraniol. It catalyses the reaction 5-methylaminomethyl-2-(Se-phospho)selenouridine(34) in tRNA + H2O = 5-methylaminomethyl-2-selenouridine(34) in tRNA + phosphate. Its function is as follows. Involved in the post-transcriptional modification of the uridine at the wobble position (U34) of tRNA(Lys), tRNA(Glu) and tRNA(Gln). Catalyzes the conversion of 2-thiouridine (S2U-RNA) to 2-selenouridine (Se2U-RNA). Acts in a two-step process involving geranylation of 2-thiouridine (S2U) to S-geranyl-2-thiouridine (geS2U) and subsequent selenation of the latter derivative to 2-selenouridine (Se2U) in the tRNA chain. In Pseudomonas putida (strain GB-1), this protein is tRNA 2-selenouridine synthase.